The primary structure comprises 1501 residues: Ribulose bisphosphate carboxylase (1501 aa).

N111 serves as a coordination point for substrate. The active-site Proton acceptor is K166. K168 contributes to the substrate binding site. Mg(2+)-binding residues include K191, D193, and E194. At K191 the chain carries N6-carboxylysine. H287 (proton acceptor) is an active-site residue. The substrate site is built by R288, H321, and S368. A propeptide spans 486-508 (linker); that stretch reads SAAAFVGASVAPAKKENVVARQA. A substrate-binding site is contributed by N619. The active-site Proton acceptor is the K674. Residue K676 coordinates substrate. Positions 699, 701, and 702 each coordinate Mg(2+). K699 bears the N6-carboxylysine mark. H795 (proton acceptor) is an active-site residue. R796, H829, and S876 together coordinate substrate. A propeptide spans 994–1016 (linker); it reads SAAAFVGASVAPAKKENVVARQA. N1127 contributes to the substrate binding site. K1182 acts as the Proton acceptor in catalysis. Residue K1184 participates in substrate binding. Residues K1207, D1209, and E1210 each coordinate Mg(2+). K1207 is subject to N6-carboxylysine. H1303 functions as the Proton acceptor in the catalytic mechanism. Substrate contacts are provided by R1304, H1337, and S1384.

Belongs to the RuBisCO large chain family. Type II subfamily. As to quaternary structure, homodimer. Mg(2+) is required as a cofactor.

The protein resides in the plastid. It is found in the chloroplast. The catalysed reaction is 2 (2R)-3-phosphoglycerate + 2 H(+) = D-ribulose 1,5-bisphosphate + CO2 + H2O. The enzyme catalyses D-ribulose 1,5-bisphosphate + O2 = 2-phosphoglycolate + (2R)-3-phosphoglycerate + 2 H(+). RuBisCO catalyzes two reactions: the carboxylation of D-ribulose 1,5-bisphosphate, the primary event in carbon dioxide fixation, as well as the oxidative fragmentation of the pentose substrate. Both reactions occur simultaneously and in competition at the same active site. This Symbiodinium sp. (Dinoflagellate) protein is Ribulose bisphosphate carboxylase (rbcL).